The chain runs to 123 residues: uncharacterized protein (123 aa).

4 helical membrane passes run 9–31 (LLLR…WISF), 38–56 (VLTL…VFAV), 67–91 (VIAV…AALY), and 98–114 (VSIV…IISA).

The protein to E.coli YhgE.

It localises to the cell membrane. This is an uncharacterized protein from Bacillus subtilis (strain 168).